A 500-amino-acid polypeptide reads, in one-letter code: Lysine--tRNA ligase (500 aa).

2 residues coordinate Mg(2+): Glu411 and Glu418.

Belongs to the class-II aminoacyl-tRNA synthetase family. As to quaternary structure, homodimer. The cofactor is Mg(2+).

The protein localises to the cytoplasm. It catalyses the reaction tRNA(Lys) + L-lysine + ATP = L-lysyl-tRNA(Lys) + AMP + diphosphate. The protein is Lysine--tRNA ligase of Azoarcus sp. (strain BH72).